A 1390-amino-acid polypeptide reads, in one-letter code: DNA-directed RNA polymerase subunit beta (1390 aa).

This sequence belongs to the RNA polymerase beta chain family. The RNAP catalytic core consists of 2 alpha, 1 beta, 1 beta' and 1 omega subunit. When a sigma factor is associated with the core the holoenzyme is formed, which can initiate transcription.

The enzyme catalyses RNA(n) + a ribonucleoside 5'-triphosphate = RNA(n+1) + diphosphate. Its function is as follows. DNA-dependent RNA polymerase catalyzes the transcription of DNA into RNA using the four ribonucleoside triphosphates as substrates. The protein is DNA-directed RNA polymerase subunit beta of Gluconobacter oxydans (strain 621H) (Gluconobacter suboxydans).